The chain runs to 266 residues: ATP synthase subunit a (266 aa).

7 consecutive transmembrane segments (helical) span residues 28 to 48 (ISFT…AIFM), 90 to 110 (LIFT…VPLF), 125 to 145 (VTVT…VGFT), 158 to 178 (HGTP…SFIL), 187 to 207 (LFVA…FIVN), 216 to 236 (AFLA…MIGI), and 239 to 259 (LEFL…SLYL).

It belongs to the ATPase A chain family. In terms of assembly, F-type ATPases have 2 components, CF(1) - the catalytic core - and CF(0) - the membrane proton channel. CF(1) has five subunits: alpha(3), beta(3), gamma(1), delta(1), epsilon(1). CF(0) has three main subunits: a(1), b(2) and c(9-12). The alpha and beta chains form an alternating ring which encloses part of the gamma chain. CF(1) is attached to CF(0) by a central stalk formed by the gamma and epsilon chains, while a peripheral stalk is formed by the delta and b chains.

Its subcellular location is the cell inner membrane. Its function is as follows. Key component of the proton channel; it plays a direct role in the translocation of protons across the membrane. This is ATP synthase subunit a from Zymomonas mobilis subsp. mobilis (strain ATCC 31821 / ZM4 / CP4).